The chain runs to 199 residues: Recombination protein RecR (199 aa).

The C4-type zinc finger occupies 58–73 (CLNCGNIGTSDICDIC). One can recognise a Toprim domain in the interval 81 to 176 (GEICVVEDVA…AVTSLAQGVP (96 aa)).

The protein belongs to the RecR family.

May play a role in DNA repair. It seems to be involved in an RecBC-independent recombinational process of DNA repair. It may act with RecF and RecO. The polypeptide is Recombination protein RecR (Dinoroseobacter shibae (strain DSM 16493 / NCIMB 14021 / DFL 12)).